A 131-amino-acid chain; its full sequence is Lymphocyte antigen 6C1 (131 aa).

A signal peptide spans 1-26 (MDTSHTTKSCVLILLVALLCAERAQG). The region spanning 27–115 (LQCYECYGVP…PTAGSTWTMA (89 aa)) is the UPAR/Ly6 domain. 5 disulfide bridges follow: Cys-29–Cys-53, Cys-32–Cys-41, Cys-46–Cys-74, Cys-78–Cys-95, and Cys-96–Cys-101. A lipid anchor (GPI-anchor amidated glycine) is attached at Gly-109. Residues 110–131 (STWTMAGVLLFSLSSVVLQTLL) constitute a propeptide, removed in mature form.

The protein localises to the cell membrane. The protein is Lymphocyte antigen 6C1 (Ly6c1) of Mus musculus (Mouse).